A 358-amino-acid polypeptide reads, in one-letter code: MLYHLLYPLASDYKLFNVFKYLTFRSIYAMITALLLAFIVGPWVVRKLEALQARQVIRTDGPESHLKKQGTPTMGGVLILVCIVLPTLLWADLKNVFIWLTLLIIVGYGVLGFVDDYKKVVEKNPKGLSPRQKMFWQMLLAAGVGIFLFYLPGFSTELYLPFFKRVHPELGILFIPFVMLVIVGASNAVNLTDGLDGLAIGPVAINAATYLLFCYIAGNAKLSGYLQIPYVPGAGELAVLCGAMVGAGLGFLWYNSYPAEVFMGDVGSLSLGGALGTLAVLTKQEILLVIVGGVFVVEALSVIFQVGSYKYRGKRIFRMAPIHHHFELKGVAEPKIIVRFWIITIILALVAISTLKMR.

Helical transmembrane passes span 24 to 44 (FRSI…GPWV), 73 to 93 (TMGG…WADL), 95 to 115 (NVFI…GFVD), 134 to 154 (MFWQ…LPGF), 169 to 189 (ELGI…SNAV), 197 to 217 (GLAI…CYIA), 233 to 253 (GAGE…GFLW), 261 to 281 (VFMG…LAVL), 286 to 306 (ILLV…IFQV), and 335 to 355 (KIIV…ISTL).

This sequence belongs to the glycosyltransferase 4 family. MraY subfamily. Mg(2+) is required as a cofactor.

Its subcellular location is the cell inner membrane. It catalyses the reaction UDP-N-acetyl-alpha-D-muramoyl-L-alanyl-gamma-D-glutamyl-meso-2,6-diaminopimeloyl-D-alanyl-D-alanine + di-trans,octa-cis-undecaprenyl phosphate = di-trans,octa-cis-undecaprenyl diphospho-N-acetyl-alpha-D-muramoyl-L-alanyl-D-glutamyl-meso-2,6-diaminopimeloyl-D-alanyl-D-alanine + UMP. It participates in cell wall biogenesis; peptidoglycan biosynthesis. Its function is as follows. Catalyzes the initial step of the lipid cycle reactions in the biosynthesis of the cell wall peptidoglycan: transfers peptidoglycan precursor phospho-MurNAc-pentapeptide from UDP-MurNAc-pentapeptide onto the lipid carrier undecaprenyl phosphate, yielding undecaprenyl-pyrophosphoryl-MurNAc-pentapeptide, known as lipid I. The protein is Phospho-N-acetylmuramoyl-pentapeptide-transferase of Citrifermentans bemidjiense (strain ATCC BAA-1014 / DSM 16622 / JCM 12645 / Bem) (Geobacter bemidjiensis).